Consider the following 410-residue polypeptide: Cathepsin D (410 aa).

Positions 1–20 (MKTPGVLLLILGLLASSSFA) are cleaved as a signal peptide. Positions 21–64 (IIRIPLRKFTSIRRTMTEVGGSVEDLILKGPITKYSMQSSPKTT) are cleaved as a propeptide — activation peptide. Residues 79-405 (YYGDIGIGTP…DRDNNRVGFA (327 aa)) enclose the Peptidase A1 domain. 2 disulfide bridges follow: cysteine 91-cysteine 160 and cysteine 110-cysteine 117. The active site involves aspartate 97. N-linked (GlcNAc...) asparagine glycosylation is present at asparagine 134. Asparagine 261 is a glycosylation site (N-linked (GlcNAc...) (high mannose) asparagine). Cysteine 284 and cysteine 288 are joined by a disulfide. Aspartate 293 is a catalytic residue. Cysteine 327 and cysteine 364 are oxidised to a cystine.

It belongs to the peptidase A1 family. Consists of a light chain and a heavy chain. Interacts with ADAM30; this leads to activation of CTSD. Interacts with GRN; stabilizes CTSD; increases its proteolytic activity. N- and O-glycosylated. Post-translationally, undergoes proteolytic cleavage and activation by ADAM30.

It localises to the lysosome. The protein localises to the melanosome. It is found in the secreted. The protein resides in the extracellular space. It carries out the reaction Specificity similar to, but narrower than, that of pepsin A. Does not cleave the 4-Gln-|-His-5 bond in B chain of insulin.. Acid protease active in intracellular protein breakdown. Plays a role in APP processing following cleavage and activation by ADAM30 which leads to APP degradation. The protein is Cathepsin D (Ctsd) of Mus musculus (Mouse).